The chain runs to 486 residues: Bifunctional protein HldE (486 aa).

A ribokinase region spans residues methionine 1–valine 331. Asparagine 207–glutamate 210 serves as a coordination point for ATP. Residue aspartate 276 is part of the active site. The segment at valine 358–histidine 486 is cytidylyltransferase.

It in the N-terminal section; belongs to the carbohydrate kinase PfkB family. This sequence in the C-terminal section; belongs to the cytidylyltransferase family. As to quaternary structure, homodimer.

The enzyme catalyses D-glycero-beta-D-manno-heptose 7-phosphate + ATP = D-glycero-beta-D-manno-heptose 1,7-bisphosphate + ADP + H(+). It catalyses the reaction D-glycero-beta-D-manno-heptose 1-phosphate + ATP + H(+) = ADP-D-glycero-beta-D-manno-heptose + diphosphate. It functions in the pathway nucleotide-sugar biosynthesis; ADP-L-glycero-beta-D-manno-heptose biosynthesis; ADP-L-glycero-beta-D-manno-heptose from D-glycero-beta-D-manno-heptose 7-phosphate: step 1/4. Its pathway is nucleotide-sugar biosynthesis; ADP-L-glycero-beta-D-manno-heptose biosynthesis; ADP-L-glycero-beta-D-manno-heptose from D-glycero-beta-D-manno-heptose 7-phosphate: step 3/4. Its function is as follows. Catalyzes the phosphorylation of D-glycero-D-manno-heptose 7-phosphate at the C-1 position to selectively form D-glycero-beta-D-manno-heptose-1,7-bisphosphate. In terms of biological role, catalyzes the ADP transfer from ATP to D-glycero-beta-D-manno-heptose 1-phosphate, yielding ADP-D-glycero-beta-D-manno-heptose. This is Bifunctional protein HldE from Koribacter versatilis (strain Ellin345).